The sequence spans 1101 residues: Translation initiation factor IF-2 (1101 aa).

Disordered stretches follow at residues 81-437 and 452-509; these read QEIL…EDDF and SIST…QRAE. A compositionally biased stretch (polar residues) spans 93–108; sequence PFSSTDAPVGSGQSSP. A compositionally biased stretch (pro residues) spans 110–124; it reads IEPPRPPMKPQPPSP. Polar residues-rich tracts occupy residues 128–149 and 157–184; these read EVTSPITDEPVSTQEDTNGSSS and SPMSPFDQQQPEQNTTDHNQEQQNQLKY. Residues 185–196 show a composition bias toward low complexity; it reads NQEQSNQLEQES. A compositionally biased stretch (polar residues) spans 197–206; that stretch reads AISSELSEVN. Basic and acidic residues-rich tracts occupy residues 228–237, 248–288, and 295–340; these read SKEKEAKSNE, KENK…DKKS, and VKRE…ELKR. The segment covering 361–378 has biased composition (acidic residues); that stretch reads EPEDVEDTAEDLLEEDPL. Composition is skewed to basic residues over residues 385-397 and 414-428; these read PKLKRPTPPKVGK and KAGKAAKAGKNKRRQ. Residues 484 to 506 show a composition bias toward basic and acidic residues; it reads EPGRGKSAERERSERKDRKEQPQ. The region spanning 592–765 is the tr-type G domain; it reads RRPPVVTIMG…LLVAEVGELS (174 aa). The G1 stretch occupies residues 601-608; that stretch reads GHVDHGKT. GTP is bound at residue 601–608; the sequence is GHVDHGKT. The tract at residues 626–630 is G2; sequence GITQH. The tract at residues 651–654 is G3; that stretch reads DTPG. GTP is bound by residues 651 to 655 and 705 to 708; these read DTPGH and NKID. Residues 705 to 708 are G4; it reads NKID. Residues 741–743 are G5; the sequence is SAL.

Belongs to the TRAFAC class translation factor GTPase superfamily. Classic translation factor GTPase family. IF-2 subfamily.

It localises to the cytoplasm. Functionally, one of the essential components for the initiation of protein synthesis. Protects formylmethionyl-tRNA from spontaneous hydrolysis and promotes its binding to the 30S ribosomal subunits. Also involved in the hydrolysis of GTP during the formation of the 70S ribosomal complex. The sequence is that of Translation initiation factor IF-2 from Gloeothece citriformis (strain PCC 7424) (Cyanothece sp. (strain PCC 7424)).